We begin with the raw amino-acid sequence, 612 residues long: Peroxisomal carnitine O-octanoyltransferase (612 aa).

The residue at position 1 (Met-1) is an N-acetylmethionine. Lys-40 and Lys-57 each carry N6-succinyllysine. His-327 serves as the catalytic Proton acceptor. Residues Lys-406 and 410–417 (KNKMLHPD) each bind CoA. The residue at position 406 (Lys-406) is an N6-acetyllysine; alternate. Lys-406 bears the N6-succinyllysine; alternate mark. (R)-carnitine contacts are provided by Tyr-439, Thr-441, and Thr-452. The Microbody targeting signal signature appears at 610–612 (THL).

This sequence belongs to the carnitine/choline acetyltransferase family. Monomer.

The protein resides in the peroxisome. The catalysed reaction is octanoyl-CoA + (R)-carnitine = O-octanoyl-(R)-carnitine + CoA. The enzyme catalyses 4,8-dimethylnonanoyl-CoA + (R)-carnitine = O-4,8-dimethylnonanoyl-(R)-carnitine + CoA. It functions in the pathway lipid metabolism; fatty acid beta-oxidation. Beta-oxidation of fatty acids. The highest activity concerns the C6 to C10 chain length substrate. Converts the end product of pristanic acid beta oxidation, 4,8-dimethylnonanoyl-CoA, to its corresponding carnitine ester. This chain is Peroxisomal carnitine O-octanoyltransferase (CROT), found in Homo sapiens (Human).